A 1197-amino-acid polypeptide reads, in one-letter code: DNA-directed RNA polymerase subunit beta (1197 aa).

The protein belongs to the RNA polymerase beta chain family. In terms of assembly, the RNAP catalytic core consists of 2 alpha, 1 beta, 1 beta' and 1 omega subunit. When a sigma factor is associated with the core the holoenzyme is formed, which can initiate transcription.

It catalyses the reaction RNA(n) + a ribonucleoside 5'-triphosphate = RNA(n+1) + diphosphate. Its function is as follows. DNA-dependent RNA polymerase catalyzes the transcription of DNA into RNA using the four ribonucleoside triphosphates as substrates. This chain is DNA-directed RNA polymerase subunit beta, found in Streptococcus pyogenes serotype M12 (strain MGAS9429).